A 440-amino-acid polypeptide reads, in one-letter code: Virion host shutoff protein (440 aa).

Disordered stretches follow at residues 98-144 (NIDH…RRKT) and 265-312 (IDEP…AGPG). A compositionally biased stretch (low complexity) spans 266 to 281 (DEPPAASEESSASDQQ).

The protein belongs to the herpesviridae VHS protein family.

Its subcellular location is the virion. Functionally, minor structural protein that acts as an endoribonuclease during lytic infection. Degrades host mRNAs in the cytoplasm by cutting them at preferred sites, including some in regions of translation initiation. This chain is Virion host shutoff protein (UL41), found in Amazona oratrix (yellow-headed parrot).